We begin with the raw amino-acid sequence, 344 residues long: Pyruvate dehydrogenase E1 component subunit alpha (344 aa).

Pyruvate contacts are provided by His55, Tyr81, Arg82, Ala130, Ile132, Asp168, Gly169, and Asn197. Thiamine diphosphate-binding residues include Tyr81, Arg82, Ala130, Ile132, Asp168, Gly169, Asn197, and His266. Asp168 contributes to the Mg(2+) binding site. Asn197 is a Mg(2+) binding site.

As to quaternary structure, heterodimer of an alpha and a beta chain. Requires thiamine diphosphate as cofactor. Mg(2+) serves as cofactor.

It is found in the plastid. The protein resides in the chloroplast. The enzyme catalyses N(6)-[(R)-lipoyl]-L-lysyl-[protein] + pyruvate + H(+) = N(6)-[(R)-S(8)-acetyldihydrolipoyl]-L-lysyl-[protein] + CO2. In terms of biological role, the pyruvate dehydrogenase complex catalyzes the overall conversion of pyruvate to acetyl-CoA and CO(2). It contains multiple copies of three enzymatic components: pyruvate dehydrogenase (E1), dihydrolipoamide acetyltransferase (E2) and lipoamide dehydrogenase (E3). The chain is Pyruvate dehydrogenase E1 component subunit alpha (pdhA) from Porphyra purpurea (Red seaweed).